We begin with the raw amino-acid sequence, 101 residues long: Movement protein (101 aa).

The chain crosses the membrane as a helical span at residues 30–50 (EVAVLSFVALICIYLLYLWVL). A disordered region spans residues 78 to 101 (RSPIPNTLEPTAPVHPGPFVPGSG). Pro residues predominate over residues 90–101 (PVHPGPFVPGSG).

The protein belongs to the mastrevirus movement protein family. As to quaternary structure, interacts with the capsid protein (CP). Part of a MP-CP-viral DNA complex.

It localises to the host membrane. In terms of biological role, involved in the viral transport within, and between cells. This chain is Movement protein, found in Maize streak virus genotype E (isolate Pat) (MSV).